We begin with the raw amino-acid sequence, 353 residues long: Serine/threonine-protein phosphatase 2A activator 1 (353 aa).

Positions 331–353 (ANNATTKMPPPLSTSTSRFIHRR) are disordered. Polar residues predominate over residues 343-353 (STSTSRFIHRR).

The protein belongs to the PTPA-type PPIase family.

The protein resides in the cytoplasm. The protein localises to the nucleus. It carries out the reaction [protein]-peptidylproline (omega=180) = [protein]-peptidylproline (omega=0). Functionally, PPIases accelerate the folding of proteins. It catalyzes the cis-trans isomerization of proline imidic peptide bonds in oligopeptides. Acts as a regulatory subunit for PP2A-like phosphatases modulating their activity or substrate specificity, probably by inducing a conformational change in the catalytic subunit, a direct target of the PPIase. Can reactivate inactive phosphatase PP2A-phosphatase methylesterase complexes (PP2Ai) in presence of ATP and Mg(2+) by dissociating the inactive form from the complex. The sequence is that of Serine/threonine-protein phosphatase 2A activator 1 (RRD1) from Kluyveromyces lactis (strain ATCC 8585 / CBS 2359 / DSM 70799 / NBRC 1267 / NRRL Y-1140 / WM37) (Yeast).